Consider the following 212-residue polypeptide: uncharacterized protein (212 aa).

Disordered stretches follow at residues 1–25 (MARK…GRPN) and 165–212 (STSG…HWGG). The span at 202-212 (RSSSARGHWGG) shows a compositional bias: low complexity.

This is an uncharacterized protein from Escherichia coli (strain K12).